The primary structure comprises 99 residues: Nucleoid-associated protein Cj1642 (99 aa).

Belongs to the YbaB/EbfC family. In terms of assembly, homodimer.

The protein resides in the cytoplasm. Its subcellular location is the nucleoid. Binds to DNA and alters its conformation. May be involved in regulation of gene expression, nucleoid organization and DNA protection. The sequence is that of Nucleoid-associated protein Cj1642 from Campylobacter jejuni subsp. jejuni serotype O:2 (strain ATCC 700819 / NCTC 11168).